The primary structure comprises 378 residues: Squalene methyltransferase 1 (378 aa).

The helical transmembrane segment at Leu-17 to Ile-37 threads the bilayer.

This sequence belongs to the class I-like SAM-binding methyltransferase superfamily. Erg6/SMT family.

It localises to the microsome membrane. The enzyme catalyses squalene + 2 S-adenosyl-L-methionine = 3,22-dimethyl-1,2,23,24-tetradehydro-2,3,22,23-tetrahydrosqualene + 2 S-adenosyl-L-homocysteine + 2 H(+). In terms of biological role, converts squalene to mono- and dimethyl derivatives, but not to tri- and tetramethylated products. Unable to methylate cycloartenol, zymosterol or lanosterol. Methylates both C-3 and C22 positions, but only C-3 position in monomethylated products. Produces mainly dimethylated squalene. This is Squalene methyltransferase 1 (TMT-1) from Botryococcus braunii (Green alga).